The sequence spans 724 residues: Phosphoribosylformylglycinamidine synthase subunit PurL (724 aa).

His-34 is an active-site residue. ATP contacts are provided by Tyr-37 and Lys-75. Residue Glu-77 coordinates Mg(2+). Residues 78-81 (SHNH) and Arg-100 contribute to the substrate site. The Proton acceptor role is filled by His-79. Mg(2+) is bound at residue Asp-101. Substrate is bound at residue Gln-221. Asp-249 is a binding site for Mg(2+). Residue 292 to 294 (ESQ) participates in substrate binding. The ATP site is built by Asp-478 and Gly-515. Residue Ser-518 coordinates substrate.

Belongs to the FGAMS family. As to quaternary structure, monomer. Part of the FGAM synthase complex composed of 1 PurL, 1 PurQ and 2 PurS subunits.

The protein resides in the cytoplasm. The catalysed reaction is N(2)-formyl-N(1)-(5-phospho-beta-D-ribosyl)glycinamide + L-glutamine + ATP + H2O = 2-formamido-N(1)-(5-O-phospho-beta-D-ribosyl)acetamidine + L-glutamate + ADP + phosphate + H(+). It functions in the pathway purine metabolism; IMP biosynthesis via de novo pathway; 5-amino-1-(5-phospho-D-ribosyl)imidazole from N(2)-formyl-N(1)-(5-phospho-D-ribosyl)glycinamide: step 1/2. Its function is as follows. Part of the phosphoribosylformylglycinamidine synthase complex involved in the purines biosynthetic pathway. Catalyzes the ATP-dependent conversion of formylglycinamide ribonucleotide (FGAR) and glutamine to yield formylglycinamidine ribonucleotide (FGAM) and glutamate. The FGAM synthase complex is composed of three subunits. PurQ produces an ammonia molecule by converting glutamine to glutamate. PurL transfers the ammonia molecule to FGAR to form FGAM in an ATP-dependent manner. PurS interacts with PurQ and PurL and is thought to assist in the transfer of the ammonia molecule from PurQ to PurL. The protein is Phosphoribosylformylglycinamidine synthase subunit PurL of Caldivirga maquilingensis (strain ATCC 700844 / DSM 13496 / JCM 10307 / IC-167).